The primary structure comprises 444 residues: Tubulin beta chain (444 aa).

Gln11, Glu69, Ser138, Gly142, Thr143, Gly144, Asn204, and Asn226 together coordinate GTP. Glu69 contacts Mg(2+).

The protein belongs to the tubulin family. As to quaternary structure, dimer of alpha and beta chains. A typical microtubule is a hollow water-filled tube with an outer diameter of 25 nm and an inner diameter of 15 nM. Alpha-beta heterodimers associate head-to-tail to form protofilaments running lengthwise along the microtubule wall with the beta-tubulin subunit facing the microtubule plus end conferring a structural polarity. Microtubules usually have 13 protofilaments but different protofilament numbers can be found in some organisms and specialized cells. Mg(2+) serves as cofactor.

It localises to the cytoplasm. The protein localises to the cytoskeleton. Its function is as follows. Tubulin is the major constituent of microtubules, a cylinder consisting of laterally associated linear protofilaments composed of alpha- and beta-tubulin heterodimers. Microtubules grow by the addition of GTP-tubulin dimers to the microtubule end, where a stabilizing cap forms. Below the cap, tubulin dimers are in GDP-bound state, owing to GTPase activity of alpha-tubulin. The sequence is that of Tubulin beta chain from Trichuris trichiura (Whipworm).